We begin with the raw amino-acid sequence, 98 residues long: Large ribosomal subunit protein uL23 (98 aa).

Belongs to the universal ribosomal protein uL23 family. In terms of assembly, part of the 50S ribosomal subunit. Contacts protein L29, and trigger factor when it is bound to the ribosome.

In terms of biological role, one of the early assembly proteins it binds 23S rRNA. One of the proteins that surrounds the polypeptide exit tunnel on the outside of the ribosome. Forms the main docking site for trigger factor binding to the ribosome. The chain is Large ribosomal subunit protein uL23 from Bifidobacterium animalis subsp. lactis (strain AD011).